Reading from the N-terminus, the 427-residue chain is Trigger factor (427 aa).

The PPIase FKBP-type domain occupies 163–248 (GDTVVIDFVG…IHEVKAKEVP (86 aa)).

The protein belongs to the FKBP-type PPIase family. Tig subfamily.

The protein resides in the cytoplasm. It carries out the reaction [protein]-peptidylproline (omega=180) = [protein]-peptidylproline (omega=0). Its function is as follows. Involved in protein export. Acts as a chaperone by maintaining the newly synthesized protein in an open conformation. Functions as a peptidyl-prolyl cis-trans isomerase. The protein is Trigger factor of Streptococcus suis (strain 98HAH33).